The following is a 128-amino-acid chain: Cytochrome c-type biogenesis protein CcmE (128 aa).

At 1–8 (MQKRVRNR) the chain is on the cytoplasmic side. A helical; Signal-anchor for type II membrane protein membrane pass occupies residues 9–29 (LITIIICFCSACLGISIILYN). The Periplasmic portion of the chain corresponds to 30–128 (LEKNIVFFLP…KHDENYRPPQ (99 aa)). His120 and Tyr124 together coordinate heme.

It belongs to the CcmE/CycJ family.

The protein localises to the cell inner membrane. In terms of biological role, heme chaperone required for the biogenesis of c-type cytochromes. Transiently binds heme delivered by CcmC and transfers the heme to apo-cytochromes in a process facilitated by CcmF and CcmH. The protein is Cytochrome c-type biogenesis protein CcmE of Rickettsia conorii (strain ATCC VR-613 / Malish 7).